The following is a 369-amino-acid chain: Probable dual-specificity RNA methyltransferase RlmN (369 aa).

Glu-106 serves as the catalytic Proton acceptor. Residues 118-354 enclose the Radical SAM core domain; it reads EARRLTVCVS…VTVRRSRGQD (237 aa). A disulfide bridge connects residues Cys-125 and Cys-359. 3 residues coordinate [4Fe-4S] cluster: Cys-132, Cys-136, and Cys-139. S-adenosyl-L-methionine is bound by residues 183 to 184, Ser-215, 238 to 240, and Asn-316; these read GE and SLH. The active-site S-methylcysteine intermediate is Cys-359.

It belongs to the radical SAM superfamily. RlmN family. Requires [4Fe-4S] cluster as cofactor.

The protein resides in the cytoplasm. The enzyme catalyses adenosine(2503) in 23S rRNA + 2 reduced [2Fe-2S]-[ferredoxin] + 2 S-adenosyl-L-methionine = 2-methyladenosine(2503) in 23S rRNA + 5'-deoxyadenosine + L-methionine + 2 oxidized [2Fe-2S]-[ferredoxin] + S-adenosyl-L-homocysteine. It catalyses the reaction adenosine(37) in tRNA + 2 reduced [2Fe-2S]-[ferredoxin] + 2 S-adenosyl-L-methionine = 2-methyladenosine(37) in tRNA + 5'-deoxyadenosine + L-methionine + 2 oxidized [2Fe-2S]-[ferredoxin] + S-adenosyl-L-homocysteine. In terms of biological role, specifically methylates position 2 of adenine 2503 in 23S rRNA and position 2 of adenine 37 in tRNAs. This is Probable dual-specificity RNA methyltransferase RlmN from Salinibacter ruber (strain DSM 13855 / M31).